A 458-amino-acid chain; its full sequence is Ammonium transporter Rh type B (458 aa).

Topologically, residues 1–13 are cytoplasmic; the sequence is MAGSPSRAAGRRL. Residues 14 to 34 traverse the membrane as a helical segment; it reads QLPLLCLFLQGATAVLFAVFV. The Extracellular segment spans residues 35-61; sequence RYNHKTDAALWHRGNYSNADNEFYFRY. Asn49 is a glycosylation site (N-linked (GlcNAc...) asparagine). Residues 62-82 form a helical membrane-spanning segment; sequence PSFQDVHAMVFVGFGFLMVFL. Residues 83-86 lie on the Cytoplasmic side of the membrane; that stretch reads QRYG. A helical membrane pass occupies residues 87 to 107; sequence FSSVGFTFLLAAFALQWSTLV. The Extracellular portion of the chain corresponds to 108 to 124; sequence QGFLHSFHSGHIHVGVE. The chain crosses the membrane as a helical span at residues 125–145; sequence SMINADFCAGAVLISFGAVLG. Topologically, residues 146–149 are cytoplasmic; that stretch reads KTGP. Residues 150–170 traverse the membrane as a helical segment; it reads AQLLLMALLEVVLFGINEFVL. Residues 171–178 are Extracellular-facing; that stretch reads LHLLGVRD. A helical membrane pass occupies residues 179 to 201; that stretch reads AGGSMTIHTFGAYFGLVLSRVLY. Residues 202-219 lie on the Cytoplasmic side of the membrane; it reads RPQLEKSKHRQGSVYHSD. The helical transmembrane segment at 220–240 threads the bilayer; it reads LFAMIGTIFLWIFWPSFNSAL. Over 241-251 the chain is Extracellular; it reads TALGAGQHRTA. A helical membrane pass occupies residues 252-272; that stretch reads LNTYYSLAASTLGTFALSALV. At 273–282 the chain is on the cytoplasmic side; that stretch reads GEDGRLDMVH. A helical transmembrane segment spans residues 283–303; it reads IQNAALAGGVVVGTSSEMMLT. Pro304 is a topological domain (extracellular). Residues 305-325 form a helical membrane-spanning segment; the sequence is FGALAAGFLAGTVSTLGYKFF. Over 326 to 346 the chain is Cytoplasmic; the sequence is TPILESKFKVQDTCGVHNLHG. A helical membrane pass occupies residues 347–367; that stretch reads MPGVLGALLGVLVAGLATHEA. At 368 to 393 the chain is on the extracellular side; that stretch reads YGDGLESVFPLIAEGQRSATSQAMLQ. Residues 394–414 form a helical membrane-spanning segment; sequence LFGLFVTLMFASVGGGLGGLL. The Cytoplasmic portion of the chain corresponds to 415-458; sequence LKLPFLDSPPDSQCYEDQVHWQVPGEHEDEAQRPLRVEEADTQA. Residues 416–424 form an interaction with ANK3 region; the sequence is KLPFLDSPP. The Basolateral sorting signal signature appears at 429–432; sequence YEDQ. The tract at residues 439–458 is disordered; sequence GEHEDEAQRPLRVEEADTQA. The segment covering 444 to 458 has biased composition (basic and acidic residues); that stretch reads EAQRPLRVEEADTQA.

It belongs to the ammonium transporter (TC 2.A.49) family. Rh subfamily. Interacts (via C-terminus) with ANK2 and ANK3; required for targeting to the basolateral membrane. N-glycosylated.

The protein localises to the cell membrane. It is found in the basolateral cell membrane. The enzyme catalyses NH4(+)(in) = NH4(+)(out). It carries out the reaction methylamine(out) = methylamine(in). The catalysed reaction is CO2(out) = CO2(in). In terms of biological role, ammonium transporter involved in the maintenance of acid-base homeostasis. Transports ammonium and its related derivative methylammonium across the basolateral plasma membrane of epithelial cells likely contributing to renal transepithelial ammonia transport and ammonia metabolism. May transport either NH4(+) or NH3 ammonia species predominantly mediating an electrogenic NH4(+) transport. May act as a CO2 channel providing for renal acid secretion. The polypeptide is Ammonium transporter Rh type B (RHBG) (Papio hamadryas (Hamadryas baboon)).